The chain runs to 782 residues: Sulfate permease family protein 3 (782 aa).

Transmembrane regions (helical) follow at residues 30–52, 64–84, 86–106, 113–133, 196–216, 232–252, 274–294, 302–322, 359–379, 398–418, 433–453, and 497–517; these read YACS…TWLP, LSGG…LASI, GVPP…YIFF, ALGG…KVML, IHVA…MGVF, GFVV…MLGI, LDNV…FLVF, WLNS…VVGI, HIGL…ITVA, ALGF…TSGF, LTCL…GPAL, and FFLT…GFAV. The STAS domain occupies 546–700; it reads KRDLERIQGN…NKVGDAVKAA (155 aa). Residues 728–742 show a composition bias toward acidic residues; the sequence is IDEESSDSNDNDDAE. The disordered stretch occupies residues 728 to 782; the sequence is IDEESSDSNDNDDAEIQERITEESENSEEVMSETSVSIEDATSLTSSRNSINSEE. Over residues 767-782 the composition is skewed to polar residues; the sequence is DATSLTSSRNSINSEE.

This sequence belongs to the SLC26A/SulP transporter (TC 2.A.53) family.

It localises to the membrane. In terms of biological role, possible sulfate transporter. The protein is Sulfate permease family protein 3 (sulp-3) of Caenorhabditis elegans.